We begin with the raw amino-acid sequence, 720 residues long: Mitogen-activated protein kinase 6 (720 aa).

M1 participates in a covalent cross-link: Peptide (Met-Gly) (interchain with G-Cter in ubiquitin). Positions 20–316 (YMDLKPLGCG…AEEALSHPYM (297 aa)) constitute a Protein kinase domain. Residues 26–34 (LGCGGNGLV) and K49 contribute to the ATP site. D152 functions as the Proton acceptor in the catalytic mechanism. S189 carries the phosphoserine; by PAK1, PAK2 and PAK3 modification. Positions 189 to 191 (SEG) match the SEG motif motif. Positions 332–337 (FHIEDE) match the FRIEDE motif motif. Phosphoserine occurs at positions 386, 554, and 556. The segment at 638 to 657 (SEMLETEPVEEGKRGERGRE) is disordered. The segment covering 647-657 (EEGKRGERGRE) has biased composition (basic and acidic residues). Residue S683 is modified to Phosphoserine. The span at 700-714 (AMKSSPQIPHKTYSS) shows a compositional bias: polar residues. Residues 700 to 720 (AMKSSPQIPHKTYSSILKHLN) form a disordered region.

This sequence belongs to the protein kinase superfamily. CMGC Ser/Thr protein kinase family. MAP kinase subfamily. In terms of assembly, heterodimer with ERK4/MAPK4. Interacts with (via FRIEDE motif) MAPKAPK5. Interacts with UBE3A; this interaction may be indirect and mediated by HERC2, possibly via HERC2 interaction with NEURL4. It depends on Mg(2+) as a cofactor. In terms of processing, phosphorylated at Ser-189 by PAK1, PAK2 and PAK3 resulting in catalytic activation. Phosphorylated by MAPKAPK5 at other sites. Post-translationally, ubiquitination at Met-1 leads to degradation by the proteasome pathway.

The protein localises to the cytoplasm. It localises to the nucleus. It catalyses the reaction L-seryl-[protein] + ATP = O-phospho-L-seryl-[protein] + ADP + H(+). The enzyme catalyses L-threonyl-[protein] + ATP = O-phospho-L-threonyl-[protein] + ADP + H(+). With respect to regulation, activated by phosphorylation at Ser-189. Its function is as follows. Atypical MAPK protein. Phosphorylates microtubule-associated protein 2 (MAP2) and MAPKAPK5. The precise role of the complex formed with MAPKAPK5 is still unclear, but the complex follows a complex set of phosphorylation events: upon interaction with atypical MAPKAPK5, ERK3/MAPK6 is phosphorylated at Ser-189 and then mediates phosphorylation and activation of MAPKAPK5, which in turn phosphorylates ERK3/MAPK6. May promote entry in the cell cycle. The protein is Mitogen-activated protein kinase 6 (Mapk6) of Mus musculus (Mouse).